The primary structure comprises 350 residues: Anthranilate phosphoribosyltransferase (350 aa).

5-phospho-alpha-D-ribose 1-diphosphate-binding positions include Gly88, 91 to 92 (GD), Thr96, 98 to 101 (NIST), 116 to 124 (KHGGRSVSS), and Ser128. Gly88 is an anthranilate binding site. Ser100 contacts Mg(2+). Position 174 (Arg174) interacts with anthranilate. The Mg(2+) site is built by Asp233 and Glu234.

It belongs to the anthranilate phosphoribosyltransferase family. In terms of assembly, homodimer. Mg(2+) is required as a cofactor.

The catalysed reaction is N-(5-phospho-beta-D-ribosyl)anthranilate + diphosphate = 5-phospho-alpha-D-ribose 1-diphosphate + anthranilate. It participates in amino-acid biosynthesis; L-tryptophan biosynthesis; L-tryptophan from chorismate: step 2/5. Its function is as follows. Catalyzes the transfer of the phosphoribosyl group of 5-phosphorylribose-1-pyrophosphate (PRPP) to anthranilate to yield N-(5'-phosphoribosyl)-anthranilate (PRA). The chain is Anthranilate phosphoribosyltransferase from Albidiferax ferrireducens (strain ATCC BAA-621 / DSM 15236 / T118) (Rhodoferax ferrireducens).